A 352-amino-acid polypeptide reads, in one-letter code: Dof zinc finger protein DOF1.8 (352 aa).

The tract at residues 24-46 (LKQQSNPPSPATPVERKARPEKD) is disordered. The segment covering 37–46 (VERKARPEKD) has biased composition (basic and acidic residues). The Dof-type zinc finger occupies 49-103 (LNCPRCNSLNTKFCYYNNYSLTQPRYFCKDCRRYWTAGGSLRNIPVGGGVRKNKR). Zn(2+) is bound by residues Cys51, Cys54, Cys76, and Cys79. Disordered stretches follow at residues 93–136 (PVGG…PLPH) and 265–334 (GGDP…VGFW). Over residues 104–129 (SSSNSSSSSPSSSSSSKKPLFANNNT) the composition is skewed to low complexity. Basic and acidic residues predominate over residues 310 to 323 (ENNDEHSDHEHEKE).

It is found in the nucleus. Functionally, transcription factor that binds specifically to a 5'-AA[AG]G-3' consensus core sequence. The polypeptide is Dof zinc finger protein DOF1.8 (DOF1.8) (Arabidopsis thaliana (Mouse-ear cress)).